The primary structure comprises 441 residues: Eukaryotic translation initiation factor 3 subunit M (441 aa).

The PCI domain maps to 196 to 365; the sequence is ESEQAYTYLL…QTFLIHRSTY (170 aa). The segment covering 405 to 418 has biased composition (basic and acidic residues); that stretch reads KEEEANKADNKYDS. Positions 405–441 are disordered; the sequence is KEEEANKADNKYDSARGFQRGGQRKQPRALDDDMGLE.

Belongs to the eIF-3 subunit M family. Component of the eukaryotic translation initiation factor 3 (eIF-3) complex.

The protein localises to the cytoplasm. Its function is as follows. Component of the eukaryotic translation initiation factor 3 (eIF-3) complex, which is involved in protein synthesis of a specialized repertoire of mRNAs and, together with other initiation factors, stimulates binding of mRNA and methionyl-tRNAi to the 40S ribosome. The eIF-3 complex specifically targets and initiates translation of a subset of mRNAs involved in cell proliferation. This Phaeosphaeria nodorum (strain SN15 / ATCC MYA-4574 / FGSC 10173) (Glume blotch fungus) protein is Eukaryotic translation initiation factor 3 subunit M.